Consider the following 187-residue polypeptide: Ribosome-recycling factor (187 aa).

It belongs to the RRF family.

It localises to the cytoplasm. Its function is as follows. Responsible for the release of ribosomes from messenger RNA at the termination of protein biosynthesis. May increase the efficiency of translation by recycling ribosomes from one round of translation to another. This Mycoplasmopsis pulmonis (strain UAB CTIP) (Mycoplasma pulmonis) protein is Ribosome-recycling factor.